Consider the following 307-residue polypeptide: Opsin-like protein carO (307 aa).

Residue Asn28 is glycosylated (N-linked (GlcNAc...) asparagine). 7 helical membrane passes run 36-56 (WYWA…GLGM), 64-84 (IFHY…FTMA), 118-138 (WFLT…MPWP), 140-160 (VLWV…GALV), 166-186 (WGYF…LAWE), 202-222 (FVMC…AWGV), and 235-255 (AVFY…LLLW). A disordered region spans residues 280 to 307 (GPNNKVASGHGARNDTATASGSNVNPNA). Asn293 carries an N-linked (GlcNAc...) asparagine glycan. The span at 294 to 307 (DTATASGSNVNPNA) shows a compositional bias: polar residues.

Belongs to the archaeal/bacterial/fungal opsin family.

It localises to the membrane. In terms of biological role, opsin-like protein; part of the car gene cluster that mediates the biosynthesis of neurosporaxanthin, a carboxylic apocarotenoid acting as an essential protective pigment and leading to orange pigmentation. The exact role of carO in carotenoid biosynthesis is not known yet, but it could be involved in the regulation of the pathway by light or other stimuli. In Fusarium fujikuroi (Bakanae and foot rot disease fungus), this protein is Opsin-like protein carO.